We begin with the raw amino-acid sequence, 116 residues long: Large ribosomal subunit protein bL17 (116 aa).

This sequence belongs to the bacterial ribosomal protein bL17 family. Part of the 50S ribosomal subunit. Contacts protein L32.

The sequence is that of Large ribosomal subunit protein bL17 from Helicobacter acinonychis (strain Sheeba).